We begin with the raw amino-acid sequence, 239 residues long: RNA-binding protein 38 (239 aa).

The region spanning 34 to 111 (TKIFVGGLPY…RKANVNLAYL (78 aa)) is the RRM domain.

Belongs to the RBM38 family.

It localises to the cytoplasm. Its subcellular location is the cytosol. It is found in the nucleus. In terms of biological role, RNA-binding protein that specifically bind the 3'-UTR of CDKN1A transcripts, leading to maintain the stability of CDKN1A transcripts, thereby acting as a mediator of the p53/TP53 family to regulate CDKN1A. CDKN1A is a cyclin-dependent kinase inhibitor transcriptionally regulated by the p53/TP53 family to induce cell cycle arrest. Isoform 1, but not isoform 2, has the ability to induce cell cycle arrest in G1 and maintain the stability of CDKN1A transcripts induced by p53/TP53. Also acts as a mRNA splicing factor. Specifically regulates the expression of FGFR2-IIIb, an epithelial cell-specific isoform of FGFR2. Plays a role in myogenic differentiation. (Microbial infection) Essential factor for the splicing of the pre-mRNAs of human parvovirus B19 (B19V) and for the expression of B19V 11-kDa protein, which enhances viral replication. The polypeptide is RNA-binding protein 38 (RBM38) (Homo sapiens (Human)).